Consider the following 178-residue polypeptide: ATP-dependent protease subunit HslV (178 aa).

Residue T7 is part of the active site. Na(+) contacts are provided by G162, C165, and T168.

The protein belongs to the peptidase T1B family. HslV subfamily. As to quaternary structure, a double ring-shaped homohexamer of HslV is capped on each side by a ring-shaped HslU homohexamer. The assembly of the HslU/HslV complex is dependent on binding of ATP.

Its subcellular location is the cytoplasm. It catalyses the reaction ATP-dependent cleavage of peptide bonds with broad specificity.. With respect to regulation, allosterically activated by HslU binding. Protease subunit of a proteasome-like degradation complex believed to be a general protein degrading machinery. The protein is ATP-dependent protease subunit HslV of Herminiimonas arsenicoxydans.